We begin with the raw amino-acid sequence, 582 residues long: Threonine--tRNA ligase (582 aa).

The catalytic stretch occupies residues 185–478 (DHRKLGKELD…LVEHYGGAFP (294 aa)). Zn(2+) contacts are provided by C278, H329, and H455.

This sequence belongs to the class-II aminoacyl-tRNA synthetase family. Homodimer. Zn(2+) serves as cofactor.

The protein resides in the cytoplasm. It carries out the reaction tRNA(Thr) + L-threonine + ATP = L-threonyl-tRNA(Thr) + AMP + diphosphate + H(+). Its function is as follows. Catalyzes the attachment of threonine to tRNA(Thr) in a two-step reaction: L-threonine is first activated by ATP to form Thr-AMP and then transferred to the acceptor end of tRNA(Thr). Also edits incorrectly charged L-seryl-tRNA(Thr). The chain is Threonine--tRNA ligase from Borrelia garinii subsp. bavariensis (strain ATCC BAA-2496 / DSM 23469 / PBi) (Borreliella bavariensis).